The chain runs to 417 residues: Serpin A9 (417 aa).

The signal sequence occupies residues 1–23 (MASYLYGVLFAVGLCAPIYCVSP). N-linked (GlcNAc...) asparagine glycans are attached at residues asparagine 101 and asparagine 390.

Belongs to the serpin family. As to expression, highly expressed in normal germinal center (GC) B-cells and GC B-cell-derived malignancies.

Its subcellular location is the secreted. It localises to the cytoplasm. The protein localises to the membrane. Its function is as follows. Protease inhibitor that inhibits trypsin and trypsin-like serine proteases (in vitro). Inhibits plasmin and thrombin with lower efficiency (in vitro). The chain is Serpin A9 (SERPINA9) from Homo sapiens (Human).